A 389-amino-acid polypeptide reads, in one-letter code: Methionyl-tRNA formyltransferase, mitochondrial (389 aa).

This sequence belongs to the Fmt family.

The protein resides in the mitochondrion. The enzyme catalyses L-methionyl-tRNA(fMet) + (6R)-10-formyltetrahydrofolate = N-formyl-L-methionyl-tRNA(fMet) + (6S)-5,6,7,8-tetrahydrofolate + H(+). Methionyl-tRNA formyltransferase that formylates methionyl-tRNA in mitochondria and is crucial for translation initiation. In Homo sapiens (Human), this protein is Methionyl-tRNA formyltransferase, mitochondrial (MTFMT).